The primary structure comprises 284 residues: Nucleotide-binding protein NMB0738 (284 aa).

Position 8–15 (8–15 (GLSGSGKS)) interacts with ATP. GTP is bound at residue 58–61 (DVRS).

It belongs to the RapZ-like family.

Functionally, displays ATPase and GTPase activities. The protein is Nucleotide-binding protein NMB0738 of Neisseria meningitidis serogroup B (strain ATCC BAA-335 / MC58).